The following is a 61-amino-acid chain: Photosystem II reaction center protein Z (61 aa).

2 consecutive transmembrane segments (helical) span residues 5–25 and 38–58; these read LTAL…VALA and TKGF…DGVA.

The protein belongs to the PsbZ family. In terms of assembly, PSII is composed of 1 copy each of membrane proteins PsbA, PsbB, PsbC, PsbD, PsbE, PsbF, PsbH, PsbI, PsbJ, PsbK, PsbL, PsbM, PsbT, PsbX, PsbY, PsbZ, Psb30/Ycf12, at least 3 peripheral proteins of the oxygen-evolving complex and a large number of cofactors. It forms dimeric complexes.

It localises to the plastid. Its subcellular location is the chloroplast thylakoid membrane. In terms of biological role, may control the interaction of photosystem II (PSII) cores with the light-harvesting antenna, regulates electron flow through the 2 photosystem reaction centers. PSII is a light-driven water plastoquinone oxidoreductase, using light energy to abstract electrons from H(2)O, generating a proton gradient subsequently used for ATP formation. In Phaeodactylum tricornutum (strain CCAP 1055/1), this protein is Photosystem II reaction center protein Z.